Reading from the N-terminus, the 1458-residue chain is RNA-directed RNA polymerase P1 (1458 aa).

Residues 148 to 168 (LSQDDRDEKGNDNREEEDVKN) are disordered. The RdRp catalytic domain occupies 686–894 (VGIGFATIYQ…KTVISHISGE (209 aa)). Residues 971–993 (DESIENKPNRRGSKAKARSTKTN) form a disordered region. The span at 979-989 (NRRGSKAKARS) shows a compositional bias: basic residues.

It belongs to the reoviridae RNA-directed RNA polymerase family.

The protein localises to the virion. It localises to the host cytoplasm. The catalysed reaction is RNA(n) + a ribonucleoside 5'-triphosphate = RNA(n+1) + diphosphate. Its function is as follows. RNA-directed RNA polymerase that is involved in both transcription and genome replication. Together with the capping enzyme P5 and protein P7, forms an enzyme complex positioned near the channels situated at each of the five-fold vertices of the core. The polypeptide is RNA-directed RNA polymerase P1 (Nephotettix cincticeps (Green rice leafhopper)).